The sequence spans 160 residues: 3-hydroxyacyl-[acyl-carrier-protein] dehydratase FabZ (160 aa).

H63 is a catalytic residue.

It belongs to the thioester dehydratase family. FabZ subfamily.

The protein resides in the cytoplasm. The enzyme catalyses a (3R)-hydroxyacyl-[ACP] = a (2E)-enoyl-[ACP] + H2O. In terms of biological role, involved in unsaturated fatty acids biosynthesis. Catalyzes the dehydration of short chain beta-hydroxyacyl-ACPs and long chain saturated and unsaturated beta-hydroxyacyl-ACPs. This chain is 3-hydroxyacyl-[acyl-carrier-protein] dehydratase FabZ, found in Xylella fastidiosa (strain M23).